Here is a 361-residue protein sequence, read N- to C-terminus: GTPase Obg (361 aa).

An Obg domain is found at 1–159 (MKFVDEAFID…KNLKLELKVL (159 aa)). The 175-residue stretch at 160 to 334 (ADVGLLGMPN…LIKTIYQHVK (175 aa)) folds into the OBG-type G domain. GTP-binding positions include 166–173 (GMPNAGKS), 191–195 (FTTLH), 213–216 (DLPG), 284–287 (NKLD), and 315–317 (SAL). 2 residues coordinate Mg(2+): serine 173 and threonine 193. Positions 339-361 (SEQPVEEVDPRFVPLPPESPETP) are disordered. The span at 351–361 (VPLPPESPETP) shows a compositional bias: pro residues.

It belongs to the TRAFAC class OBG-HflX-like GTPase superfamily. OBG GTPase family. As to quaternary structure, monomer. Requires Mg(2+) as cofactor.

It is found in the cytoplasm. An essential GTPase which binds GTP, GDP and possibly (p)ppGpp with moderate affinity, with high nucleotide exchange rates and a fairly low GTP hydrolysis rate. Plays a role in control of the cell cycle, stress response, ribosome biogenesis and in those bacteria that undergo differentiation, in morphogenesis control. This is GTPase Obg from Polaromonas sp. (strain JS666 / ATCC BAA-500).